The primary structure comprises 2467 residues: Polyprotein P1234 (2467 aa).

Residues Glu27–His258 enclose the Alphavirus-like MT domain. Positions Gly243–Val262 are nsP1 membrane-binding. S-palmitoyl cysteine; by host attachment occurs at residues Cys416 and Cys418. A (+)RNA virus helicase ATP-binding domain is found at Asp689–Lys841. Gly720–Ser727 provides a ligand contact to a ribonucleoside 5'-triphosphate. Positions Ser842–Gly990 constitute a (+)RNA virus helicase C-terminal domain. A Peptidase C9 domain is found at Asp1003–Asn1325. The tract at residues Pro1004–Thr1023 is nucleolus localization signal. Cys1012 serves as the catalytic For cysteine protease nsP2 activity. The short motif at Thr1056 to Ser1065 is the Nuclear export signal element. The active-site For cysteine protease nsP2 activity is the His1081. The Nuclear localization signal motif lies at Pro1180 to Val1184. The 161-residue stretch at Cys1332–Thr1492 folds into the Macro domain. Asp1342, Asn1356, Gly1364, Gly1444, and Phe1446 together coordinate ADP-D-ribose. Positions 1594, 1596, 1619, and 1637 each coordinate Zn(2+). The interval Val1766–Pro1803 is disordered. Over residues Pro1774 to Ala1783 the composition is skewed to pro residues. 2 short sequence motifs (FGDF; binding to host G3BP1) span residues Phe1820 to Leu1823 and Phe1841 to Ile1844. Residues Ala2222–Glu2337 enclose the RdRp catalytic domain.

Interacts with non-structural protein 3. Interacts with RNA-directed RNA polymerase nsP4. Interacts with protease nsP2. interacts with itself. As to quaternary structure, interacts with mRNA-capping enzyme nsP1. Interacts with host DDX1. Interacts with host DDX3. Interacts (via C-terminus) with host G3BP1; this interaction inhibits the formation of host stress granules on viral mRNAs and the nsp3-G3BP1 complexes bind viral RNAs and probably orchestrate the assembly of viral replication complexes. Interacts (via C-terminus) with host G3BP2; this interaction inhibits the formation of host stress granules on viral mRNAs and the nsp3-G3BP2 complexes bind viral RNAs and probably orchestrate the assembly of viral replication complexes. In terms of assembly, interacts with mRNA-capping enzyme nsP1. Interacts with protease nsP2. interacts with itself. Interacts with RNA-directed RNA polymerase nsP4. Interacts with mRNA-capping enzyme nsP1. Interacts with KPNA1/karyopherin-alpha1; this interaction probably allows the active transport of protease nsP2 into the host nucleus. Requires Mg(2+) as cofactor. Mn(2+) is required as a cofactor. Post-translationally, specific enzymatic cleavages in vivo yield mature proteins. The processing of the polyprotein is temporally regulated. In early stages (1.7 hpi), P1234 is first cleaved in trans through its nsP2 protease activity, releasing P123' and nsP4, which associate to form the early replication complex. At the same time, P1234 is also cut at the nsP1/nsP2 site early in infection but with lower efficiency. After replication of the viral minus-strand RNAs (4 hpi), the polyproteins are cut at the nsP1/nsP2 and nsP2/nsP3 sites very efficiently, preventing accumulation of P123' and P1234 and allowing the formation of the late replication complex. NsP3'/nsP4 site is not cleaved anymore and P34 is produced rather than nsP4. In terms of processing, specific enzymatic cleavages in vivo yield mature proteins. The processing of the polyprotein is temporally regulated. In early stages (1.7 hpi), P123 is cleaved at the nsP1/nsP2 site with low efficiency. After replication of the viral minus-strand RNAs (4 hpi), the polyproteins are cut at the nsP1/nsP2 and nsP2/nsP3 sites very efficiently, preventing accumulation of P123 and allowing the formation of the late replication complex. Specific enzymatic cleavages in vivo yield mature proteins. The processing of the polyprotein is temporally regulated. In early stages (1.7 hpi), P123' is cleaved at the nsP1/nsP2 site with low efficiency. After replication of the viral minus-strand RNAs (4 hpi), the polyproteins are cut at the nsP1/nsP2 and nsP2/nsP3 sites very efficiently, preventing accumulation of P123' and allowing the formation of the late replication complex. Post-translationally, palmitoylated by host palmitoyltransferases ZDHHC2 and ZDHHC19. In terms of processing, phosphorylated by host on serines and threonines. Ubiquitinated; targets the protein for rapid degradation via the ubiquitin system. Nsp4 is present in extremely low quantities due to low frequency of translation through the amber stop-codon and the degradation by the ubiquitin pathway.

It localises to the host cytoplasmic vesicle membrane. Its subcellular location is the host cell membrane. The protein resides in the host cell projection. It is found in the host filopodium. The protein localises to the host nucleus. It localises to the host cytoplasm. The enzyme catalyses GTP + S-adenosyl-L-methionine = N(7)-methyl-GTP + S-adenosyl-L-homocysteine. It carries out the reaction N(7)-methyl-GTP + L-histidyl-[protein] = N(tele)-(N(7)-methylguanosine 5'-phospho)-L-histidyl-[protein] + diphosphate. The catalysed reaction is N(tele)-(N(7)-methylguanosine 5'-phospho)-L-histidyl-[protein] + a 5'-end diphospho-(purine-ribonucleoside) in mRNA + H(+) = a 5'-end (N(7)-methyl 5'-triphosphoguanosine)-(purine-ribonucleoside) in mRNA + L-histidyl-[protein]. It catalyses the reaction a 5'-end triphospho-ribonucleoside in mRNA + H2O = a 5'-end diphospho-ribonucleoside in mRNA + phosphate + H(+). The enzyme catalyses a ribonucleoside 5'-triphosphate + H2O = a ribonucleoside 5'-diphosphate + phosphate + H(+). It carries out the reaction ATP + H2O = ADP + phosphate + H(+). The catalysed reaction is RNA(n) + a ribonucleoside 5'-triphosphate = RNA(n+1) + diphosphate. It catalyses the reaction RNA(n) + ATP = RNA(n)-3'-adenine ribonucleotide + diphosphate. The enzyme catalyses 4-O-(ADP-D-ribosyl)-L-aspartyl-[protein] + H2O = L-aspartyl-[protein] + ADP-D-ribose + H(+). It carries out the reaction 5-O-(ADP-D-ribosyl)-L-glutamyl-[protein] + H2O = L-glutamyl-[protein] + ADP-D-ribose + H(+). The catalysed reaction is ADP-alpha-D-ribose 1''-phosphate + H2O = ADP-D-ribose + phosphate. Functionally, inactive precursor of the viral replicase, which is activated by cleavages carried out by the viral protease nsP2. Its function is as follows. The early replication complex formed by the polyprotein P123 and nsP4 synthesizes minus-strand RNAs. As soon P123 is cleaved into mature proteins, the plus-strand RNAs synthesis begins. The early replication complex formed by the polyprotein P123' and nsP4 synthesizes minus-strand RNAs. Polyprotein P123' is a short-lived polyprotein that accumulates during early stage of infection. As soon P123' is cleaved into mature proteins, the plus-strand RNAs synthesis begins. In terms of biological role, cytoplasmic capping enzyme that catalyzes two virus-specific reactions: methyltransferase and nsP1 guanylyltransferase. mRNA-capping is necessary since all viral RNAs are synthesized in the cytoplasm, and host capping enzymes are restricted to the nucleus. The enzymatic reaction involves a covalent link between 7-methyl-GMP and nsP1, whereas eukaryotic capping enzymes form a covalent complex only with GMP. nsP1 capping consists in the following reactions: GTP is first methylated into 7-methyl-GMP and then is covalently linked to nsP1 to form the m7GMp-nsP1 complex from which 7-methyl-GMP complex is transferred to the mRNA to create the cap structure. NsP1 is needed for the initiation of the minus-strand RNAs synthesis. Probably serves as a membrane anchor for the replication complex composed of nsP1-nsP4. Palmitoylated nsP1 is remodeling host cell cytoskeleton, and induces filopodium-like structure formation at the surface of the host cell. Functionally, multifunctional protein whose N-terminus is part of the RNA polymerase complex and displays NTPase, RNA triphosphatase and helicase activities. NTPase and RNA triphosphatase are involved in viral RNA capping and helicase keeps a check on the dsRNA replication intermediates. The C-terminus harbors a protease that specifically cleaves the polyproteins and releases the mature proteins. Required for the shutoff of minus-strand RNAs synthesis. Specifically inhibits the host IFN response by promoting the nuclear export of host STAT1. Also inhibits host transcription by inducing rapid proteasome-dependent degradation of POLR2A, a catalytic subunit of the RNAPII complex. The resulting inhibition of cellular protein synthesis serves to ensure maximal viral gene expression and to evade host immune response. Its function is as follows. Seems to be essential for minus-strand RNAs and subgenomic 26S mRNAs synthesis. Displays mono-ADP-ribosylhydrolase activity. ADP-ribosylation is a post-translational modification that controls various processes of the host cell and the virus probably needs to revert it for optimal viral replication. Binds proteins of FXR family and sequesters them into the viral RNA replication complexes thereby inhibiting the formation of host stress granules on viral mRNAs. The nsp3'-FXR complexes bind viral RNAs and probably orchestrate the assembly of viral replication complexes, thanks to the ability of FXR family members to self-assemble and bind DNA. Seems to be essential for minus-strand RNAs and subgenomic 26S mRNAs synthesis. Displays mono-ADP-ribosylhydrolase activity. ADP-ribosylation is a post-translantional modification that controls various processes of the host cell and the virus probably needs to revert it for optimal viral replication. Binds proteins of G3BP family and sequesters them into the viral RNA replication complexes thereby inhibiting the formation of host stress granules on viral mRNAs. The nsp3-G3BP complexes bind viral RNAs and probably orchestrate the assembly of viral replication complexes, thanks to the ability of G3BP family members to self-assemble and bind DNA. In terms of biological role, RNA dependent RNA polymerase. Replicates genomic and antigenomic RNA by recognizing replications specific signals. The early replication complex formed by the polyprotein P123 and nsP4 synthesizes minus-strand RNAs. The late replication complex composed of fully processed nsP1-nsP4 is responsible for the production of genomic and subgenomic plus-strand RNAs. The core catalytic domain of nsP4 also possesses terminal adenylyltransferase (TATase) activity that is probably involved in maintenance and repair of the poly(A) tail, an element required for replication of the viral genome. In Sagiyama virus (SAGV), this protein is Polyprotein P1234.